The chain runs to 43 residues: uncharacterized protein (43 aa).

The span at 1–37 (MIIKNNNNNNNNNNNNNNNNNNNNNNNNNNNNNNNNN) shows a compositional bias: low complexity. A disordered region spans residues 1 to 43 (MIIKNNNNNNNNNNNNNNNNNNNNNNNNNNNNNNNNNIEIIIK).

This is an uncharacterized protein from Dictyostelium discoideum (Social amoeba).